Here is a 90-residue protein sequence, read N- to C-terminus: Small ribosomal subunit protein uS17 (90 aa).

The protein belongs to the universal ribosomal protein uS17 family. In terms of assembly, part of the 30S ribosomal subunit.

One of the primary rRNA binding proteins, it binds specifically to the 5'-end of 16S ribosomal RNA. The protein is Small ribosomal subunit protein uS17 of Treponema denticola (strain ATCC 35405 / DSM 14222 / CIP 103919 / JCM 8153 / KCTC 15104).